The chain runs to 718 residues: Mitotic spindle assembly checkpoint protein MAD1 (718 aa).

Methionine 1 is modified (N-acetylmethionine). Serine 16 carries the phosphoserine modification. Residues 46 to 632 (QQSMQLEERA…QTKIQEFRKA (587 aa)) are a coiled coil. Lysine 61 is modified (N6-acetyllysine; alternate). A Glycyl lysine isopeptide (Lys-Gly) (interchain with G-Cter in SUMO2); alternate cross-link involves residue lysine 61. Residues 79–82 (KRAR) carry the Nuclear localization signal motif. At serine 214 the chain carries Phosphoserine. Residues 301-340 (VGLELENERLLAKLQSWERLDQTMGLSIRTPEDLSRFVVE) are important for interaction with IK. A necessary for interaction with NEK2 region spans residues 380–532 (LLEERKKRET…EAQLERRALQ (153 aa)). Position 428 is a phosphoserine (serine 428). An important for interaction with IK region spans residues 439-480 (EDMVQKVHSHSAEMEAQLSQALEELGGQKQRADMLEMELKML). A necessary for interaction with MAD2L1 region spans residues 540 to 551 (TKVLHMSLNPTS). Phosphoserine is present on residues serine 598 and serine 610. Tyrosine 634 bears the Phosphotyrosine mark. The residue at position 716 (threonine 716) is a Phosphothreonine.

Belongs to the MAD1 family. In terms of assembly, homodimer. Dimerizes via its N- and C- terminal regions. Heterodimerizes with MAD2L1 in order to form a tetrameric MAD1L1-MAD2L1 core complex. Interacts with the closed conformation form of MAD2L1 (C-MAD2) and open conformation form of MAD2L1 (O-MAD2). It is unclear whether MAD1L1 dimerization promotes the conversion of closed to open conformation of MAD2L1. Formation of a heterotetrameric core complex containing two molecules each of MAD1L1 and of MAD2L1 promotes binding of another molecule of MAD2L1 to each MAD2L1, resulting in a heterohexamer. Perturbation of the original MAD1L1-MAD2L1 structure by the spindle checkpoint may decrease MAD2L1 affinity for MAD1L1. CDC20 can compete with MAD1L1 for MAD2L1 binding, until the attachment and/or tension dampen the checkpoint signal, preventing further release of MAD2L1 on to CDC20. Also able to interact with the BUB1/BUB3 complex. Interacts with NEK2. Interacts with TTK. Interacts with TPR; the interactions occurs in a microtubule-independent manner. Interacts with IK. Interacts with the viral Tax protein. Interacts with PRAP1. As to quaternary structure, interacts with MAD2L1; this interaction leads to the cytoplasmic sequestration of MAD2L1. Interacts with PRAP1. Post-translationally, phosphorylated; by BUB1. Become hyperphosphorylated in late S through M phases or after mitotic spindle damage. Phosphorylated; by TTK. In terms of tissue distribution, expressed in hepatocellular carcinomas and hepatoma cell lines (at protein level).

It localises to the nucleus. The protein resides in the chromosome. The protein localises to the centromere. It is found in the kinetochore. Its subcellular location is the nucleus envelope. It localises to the cytoplasm. The protein resides in the cytoskeleton. The protein localises to the microtubule organizing center. It is found in the centrosome. Its subcellular location is the spindle. It localises to the spindle pole. Its function is as follows. Component of the spindle-assembly checkpoint that prevents the onset of anaphase until all chromosomes are properly aligned at the metaphase plate. Forms a heterotetrameric complex with the closed conformation form of MAD2L1 (C-MAD2) at unattached kinetochores during prometaphase, recruits an open conformation of MAD2L1 (O-MAD2) and promotes the conversion of O-MAD2 to C-MAD2, which ensures mitotic checkpoint signaling. Functionally, sequesters MAD2L1 in the cytoplasm preventing its function as an activator of the mitotic spindle assembly checkpoint (SAC) resulting in SAC impairment and chromosomal instability in hepatocellular carcinomas. In Homo sapiens (Human), this protein is Mitotic spindle assembly checkpoint protein MAD1 (MAD1L1).